Reading from the N-terminus, the 672-residue chain is Penicillin-binding protein activator LpoA (672 aa).

The first 26 residues, 1-26, serve as a signal peptide directing secretion; that stretch reads MLPFHLVRTQAGRVIPVLLAALFLAG. Cys27 is lipidated: N-palmitoyl cysteine. A lipid anchor (S-diacylglycerol cysteine) is attached at Cys27. The tract at residues 298–336 is disordered; the sequence is APPTDTAQAGQVTPSSDGQNAQSPAPYSDQAVASTTPAP. Polar residues predominate over residues 305-322; it reads QAGQVTPSSDGQNAQSPA. Over residues 327–336 the composition is skewed to low complexity; the sequence is QAVASTTPAP.

It belongs to the LpoA family. In terms of assembly, interacts with PBP1a.

The protein localises to the cell outer membrane. Functionally, regulator of peptidoglycan synthesis that is essential for the function of penicillin-binding protein 1A (PBP1a). The protein is Penicillin-binding protein activator LpoA of Pectobacterium parmentieri (strain WPP163) (Pectobacterium wasabiae (strain WPP163)).